The following is a 124-amino-acid chain: uncharacterized protein (124 aa).

2 disordered regions span residues 1–26 (MRRQ…QPRP) and 100–124 (IPGQ…GLRR). Residues 102–115 (GQQSRNCSLPQTKY) are compositionally biased toward polar residues.

The protein resides in the cytoplasm. It is found in the cytoskeleton. The protein localises to the cilium basal body. This is an uncharacterized protein from Rattus norvegicus (Rat).